Here is a 128-residue protein sequence, read N- to C-terminus: Infection structure-specific protein 56 (128 aa).

Composition is skewed to polar residues over residues 27 to 36 and 87 to 101; these read HATYPQSQPH and TSISASQHQRQDSQS. Disordered regions lie at residues 27–48 and 86–128; these read HATYPQSQPHATKRSFGPAVPS and GTSI…STSA. Residues 115–128 show a composition bias toward basic and acidic residues; it reads KDAKKELKDPSTSA.

General role in the development of germlings including formation of the infection structures. This Uromyces appendiculatus (Rust fungus) protein is Infection structure-specific protein 56 (INF56).